The primary structure comprises 336 residues: 4-hydroxy-3-methylbut-2-enyl diphosphate reductase (336 aa).

[4Fe-4S] cluster is bound at residue Cys-32. The (2E)-4-hydroxy-3-methylbut-2-enyl diphosphate site is built by His-61 and His-94. The dimethylallyl diphosphate site is built by His-61 and His-94. 2 residues coordinate isopentenyl diphosphate: His-61 and His-94. A [4Fe-4S] cluster-binding site is contributed by Cys-116. His-148 provides a ligand contact to (2E)-4-hydroxy-3-methylbut-2-enyl diphosphate. His-148 is a dimethylallyl diphosphate binding site. His-148 is a binding site for isopentenyl diphosphate. The active-site Proton donor is the Glu-150. Thr-189 is a binding site for (2E)-4-hydroxy-3-methylbut-2-enyl diphosphate. A [4Fe-4S] cluster-binding site is contributed by Cys-219. (2E)-4-hydroxy-3-methylbut-2-enyl diphosphate-binding residues include Ser-247, Ser-248, Asn-249, and Ser-292. Residues Ser-247, Ser-248, Asn-249, and Ser-292 each coordinate dimethylallyl diphosphate. Isopentenyl diphosphate contacts are provided by Ser-247, Ser-248, Asn-249, and Ser-292.

Belongs to the IspH family. Requires [4Fe-4S] cluster as cofactor.

The enzyme catalyses isopentenyl diphosphate + 2 oxidized [2Fe-2S]-[ferredoxin] + H2O = (2E)-4-hydroxy-3-methylbut-2-enyl diphosphate + 2 reduced [2Fe-2S]-[ferredoxin] + 2 H(+). It catalyses the reaction dimethylallyl diphosphate + 2 oxidized [2Fe-2S]-[ferredoxin] + H2O = (2E)-4-hydroxy-3-methylbut-2-enyl diphosphate + 2 reduced [2Fe-2S]-[ferredoxin] + 2 H(+). Its pathway is isoprenoid biosynthesis; dimethylallyl diphosphate biosynthesis; dimethylallyl diphosphate from (2E)-4-hydroxy-3-methylbutenyl diphosphate: step 1/1. The protein operates within isoprenoid biosynthesis; isopentenyl diphosphate biosynthesis via DXP pathway; isopentenyl diphosphate from 1-deoxy-D-xylulose 5-phosphate: step 6/6. Its function is as follows. Catalyzes the conversion of 1-hydroxy-2-methyl-2-(E)-butenyl 4-diphosphate (HMBPP) into a mixture of isopentenyl diphosphate (IPP) and dimethylallyl diphosphate (DMAPP). Acts in the terminal step of the DOXP/MEP pathway for isoprenoid precursor biosynthesis. In Gluconobacter oxydans (strain 621H) (Gluconobacter suboxydans), this protein is 4-hydroxy-3-methylbut-2-enyl diphosphate reductase.